The following is a 28-amino-acid chain: Chaperonin GroEL (28 aa).

Belongs to the chaperonin (HSP60) family. As to quaternary structure, forms a cylinder of 14 subunits composed of two heptameric rings stacked back-to-back. Interacts with the co-chaperonin GroES.

It is found in the cytoplasm. It carries out the reaction ATP + H2O + a folded polypeptide = ADP + phosphate + an unfolded polypeptide.. In terms of biological role, together with its co-chaperonin GroES, plays an essential role in assisting protein folding. The GroEL-GroES system forms a nano-cage that allows encapsulation of the non-native substrate proteins and provides a physical environment optimized to promote and accelerate protein folding. This Mycolicibacterium smegmatis (Mycobacterium smegmatis) protein is Chaperonin GroEL.